The following is a 138-amino-acid chain: Transcription antitermination protein NusB (138 aa).

The protein belongs to the NusB family.

In terms of biological role, involved in transcription antitermination. Required for transcription of ribosomal RNA (rRNA) genes. Binds specifically to the boxA antiterminator sequence of the ribosomal RNA (rrn) operons. In Geobacter sulfurreducens (strain ATCC 51573 / DSM 12127 / PCA), this protein is Transcription antitermination protein NusB.